A 98-amino-acid polypeptide reads, in one-letter code: Large ribosomal subunit protein uL23 (98 aa).

Belongs to the universal ribosomal protein uL23 family. Part of the 50S ribosomal subunit. Contacts protein L29, and trigger factor when it is bound to the ribosome.

Functionally, one of the early assembly proteins it binds 23S rRNA. One of the proteins that surrounds the polypeptide exit tunnel on the outside of the ribosome. Forms the main docking site for trigger factor binding to the ribosome. This chain is Large ribosomal subunit protein uL23, found in Thioalkalivibrio sulfidiphilus (strain HL-EbGR7).